Here is a 213-residue protein sequence, read N- to C-terminus: Orotate phosphoribosyltransferase (213 aa).

Lysine 26 is a 5-phospho-alpha-D-ribose 1-diphosphate binding site. Position 34–35 (34–35 (FF)) interacts with orotate. 5-phospho-alpha-D-ribose 1-diphosphate contacts are provided by residues 72–73 (YK), arginine 99, lysine 100, lysine 103, histidine 105, and 124–132 (DDVITAGTA). Orotate is bound by residues threonine 128 and arginine 156.

It belongs to the purine/pyrimidine phosphoribosyltransferase family. PyrE subfamily. As to quaternary structure, homodimer. Requires Mg(2+) as cofactor.

The catalysed reaction is orotidine 5'-phosphate + diphosphate = orotate + 5-phospho-alpha-D-ribose 1-diphosphate. It participates in pyrimidine metabolism; UMP biosynthesis via de novo pathway; UMP from orotate: step 1/2. Its function is as follows. Catalyzes the transfer of a ribosyl phosphate group from 5-phosphoribose 1-diphosphate to orotate, leading to the formation of orotidine monophosphate (OMP). In Pseudomonas paraeruginosa (strain DSM 24068 / PA7) (Pseudomonas aeruginosa (strain PA7)), this protein is Orotate phosphoribosyltransferase.